A 250-amino-acid polypeptide reads, in one-letter code: Myelin basic protein (250 aa).

The span at 1–28 (MGNHSGKRELSAEKASKDGEIHRGEAGK) shows a compositional bias: basic and acidic residues. The disordered stretch occupies residues 1–150 (MGNHSGKREL…SQRSKYLATA (150 aa)). Gly2 is subject to N-acetylalanine. 2 positions are modified to phosphoserine: Ser31 and Ser40. Residues 95 to 113 (FSRDAPGREDNTFKDRPSE) are compositionally biased toward basic and acidic residues. Position 96 is a phosphothreonine (Ser96). Glu113 carries the post-translational modification Phosphoserine. A Phosphothreonine modification is found at Glu122. A Phosphotyrosine modification is found at Thr125. Phosphoserine is present on residues Ala135, Arg139, Ser141, and Ser144. Tyr146 and Leu147 each carry phosphotyrosine. Thr149 bears the Phosphothreonine mark. Ser151 carries the phosphoserine modification. At Ser151 the chain carries Phosphotyrosine. A Phosphothreonine modification is found at Thr152. Arg157 and Arg163 each carry citrulline. Thr167 carries the post-translational modification Phosphothreonine. Ser172 carries the phosphoserine modification. Arg175 and Arg181 each carry omega-N-methylarginine. The disordered stretch occupies residues 175–250 (RFFSGDRGAP…SRSGSPMARR (76 aa)). Phosphoserine is present on Ser188. At Thr197 the chain carries Phosphothreonine. The segment covering 197 to 206 (THYGSLPQKS) has biased composition (polar residues). Phosphotyrosine is present on Tyr199. Ser206 is modified (phosphoserine). Thr211, Thr226, and Thr229 each carry phosphothreonine. A Deamidated glutamine modification is found at Gln234. Residue Arg239 is modified to Citrulline. Ser241 carries the post-translational modification Phosphoserine. Ser245 bears the Phosphoserine; by UHMK1 mark. Arg250 carries the post-translational modification Citrulline.

It belongs to the myelin basic protein family. Homodimer. Post-translationally, as in other animals, several charge isomers may be produced as a result of optional post-translational modifications, such as phosphorylation of serine or threonine residues, deamidation of glutamine or asparagine residues, citrullination and methylation of arginine residues. In terms of processing, methylated on arginine residues; decreases with the age of the animal, making MBP more cationic. Phosphorylated by TAOK2, VRK2, MAPK11, MAPK12, MAPK14 and MINK1. Post-translationally, proteolytically cleaved in B cell lysosomes by cathepsin CTSG which degrades the major immunogenic MBP epitope and prevents the activation of MBP-specific autoreactive T cells. In the embryo, isoform 1-isoform 3 are found in neurons within the central nervous system (primarily in pioneer neurons important in the formation of the cortex) and the peripheral nervous system. They are also expressed in the thymus, gut, lung and kidney. In the adult, isoform 1-isoform 3 are highly expressed in the brain (mainly in brain regions rich in oligodendrocytes) and spleen. Lower levels are seen in the heart, kidney and lung. Isoform 2 is also found in cells of the immune system. The isoforms missing the 134 first amino acids (isoform 4-isoform 13) are almost exclusively produced in the myelin-forming cells, the mature oligodendrocytes.

The protein resides in the myelin membrane. Its subcellular location is the cytoplasm. The protein localises to the nucleus. Its function is as follows. The classic group of MBP isoforms (isoform 4-isoform 13) are with PLP the most abundant protein components of the myelin membrane in the CNS. They have a role in both its formation and stabilization. The non-classic group of MBP isoforms (isoform 1-isoform 3/Golli-MBPs) may preferentially have a role in the early developing brain long before myelination, maybe as components of transcriptional complexes, and may also be involved in signaling pathways in T-cells and neural cells. Differential splicing events combined to optional post-translational modifications give a wide spectrum of isomers, with each of them potentially having a specialized function. The polypeptide is Myelin basic protein (Mbp) (Mus musculus (Mouse)).